The following is a 447-amino-acid chain: MGRLFGTDGVRGIANKELTPQLAFELGRAGAYVLTEGSHRPKVVVGKDSRISSDMLECALIAGLTSLGAEVVSVGIIPTPAVAYLTRLYKADAGVMISASHNPIEYNGIKFFDKFGYKLPDKLEDRIEEIINEKKELPVPTGIGIGRRKESLTSHRDYIEFLKSTIDTDLKGLKIVIDCAYGASSTVAPILFKELGAEVIAYAAELLGEKINVGCGSTHPEKLQQLVVEHKADLGLAFDGDADRLIAVDEKGNIVDGDHIMAICAIDMKSKGKLKHNTVVATVMSNIGFEIALKEHGIKLIRTKVGDRYVLEEMIKGGYSIGGEQSGHIIFIDDNTTGDGEITALKLCSIMKHTGKKLSELASCMTTYPQVLVNAKVKNELKEKYLEDEDIKREIEKLEKEMEGKGRVLIRPSGTEPLIRVMVEGEDYAKISQMAKELADLIERKLN.

Residue Ser100 is the Phosphoserine intermediate of the active site. Residues Ser100, Asp239, Asp241, and Asp243 each coordinate Mg(2+). Residue Ser100 is modified to Phosphoserine.

It belongs to the phosphohexose mutase family. Mg(2+) serves as cofactor. Activated by phosphorylation.

It catalyses the reaction alpha-D-glucosamine 1-phosphate = D-glucosamine 6-phosphate. Its function is as follows. Catalyzes the conversion of glucosamine-6-phosphate to glucosamine-1-phosphate. This chain is Phosphoglucosamine mutase, found in Caldanaerobacter subterraneus subsp. tengcongensis (strain DSM 15242 / JCM 11007 / NBRC 100824 / MB4) (Thermoanaerobacter tengcongensis).